The chain runs to 514 residues: Protein farnesyltransferase subunit beta (514 aa).

Residues 1 to 13 (MRHHTKNLRRRAI) are compositionally biased toward basic residues. Residues 1–56 (MRHHTKNLRRRAIFLRTTPRGNMDSSSSVATSTSSSSNHRLVRSSEGSPSAGGDDI) form a disordered region. The span at 25 to 39 (SSSSVATSTSSSSNH) shows a compositional bias: low complexity. 5 PFTB repeats span residues 180-221 (AESL…AVVG), 231-272 (RRAL…SLLN), 293-334 (FTGL…SLLG), 346-388 (IERL…PLIE), and 410-454 (REGL…SSAQ). Residues 319-322 (HGAY) and 367-370 (RTNK) contribute to the (2E,6E)-farnesyl diphosphate site. Residues aspartate 373 and cysteine 375 each contribute to the Zn(2+) site. Position 376–379 (376–379 (YSHW)) interacts with (2E,6E)-farnesyl diphosphate. Histidine 442 is a Zn(2+) binding site.

This sequence belongs to the protein prenyltransferase subunit beta family. In terms of assembly, heterodimer of an alpha and a beta subunit. Interacts with RAS1 and RAS2. Zn(2+) serves as cofactor. In terms of tissue distribution, highly expressed in mycelium, conidium, conidial germination, early formed appressorium and the late infection hypha.

It localises to the cytoplasm. It carries out the reaction L-cysteinyl-[protein] + (2E,6E)-farnesyl diphosphate = S-(2E,6E)-farnesyl-L-cysteinyl-[protein] + diphosphate. In terms of biological role, catalyzes the transfer of a farnesyl moiety from farnesyl diphosphate to a cysteine at the fourth position from the C-terminus of several proteins having the C-terminal sequence Cys-aliphatic-aliphatic-X. The beta subunit is responsible for peptide-binding. The protein is Protein farnesyltransferase subunit beta (RAM1) of Pyricularia oryzae (strain 70-15 / ATCC MYA-4617 / FGSC 8958) (Rice blast fungus).